A 597-amino-acid chain; its full sequence is Hydrogenase-1 large chain (597 aa).

Positions 76, 79, 576, and 579 each coordinate Ni(2+).

It belongs to the [NiFe]/[NiFeSe] hydrogenase large subunit family. In terms of assembly, heterodimer of a large and a small subunit. It depends on Ni(2+) as a cofactor.

The protein localises to the cell membrane. The catalysed reaction is H2 + A = AH2. The polypeptide is Hydrogenase-1 large chain (hyaB) (Citrobacter freundii).